We begin with the raw amino-acid sequence, 615 residues long: Medium-chain acyl-CoA ligase ACSF2, mitochondrial (615 aa).

The N-terminal 49 residues, 1 to 49 (MAVYLGMLRLGRLCVASLGARGPRTPLSRPWPNSKLQGVRAFSSGMVDC), are a transit peptide targeting the mitochondrion. Lys179 carries the post-translational modification N6-acetyllysine. Residue Lys182 is modified to N6-acetyllysine; alternate. Lys182 is subject to N6-succinyllysine; alternate. Lys199 is subject to N6-acetyllysine. 263–271 (TSGTTGNPK) is a binding site for ATP. Residues Lys340 and Lys398 each carry the N6-acetyllysine modification. Lys478 bears the N6-succinyllysine mark. ATP-binding residues include Asp493 and Arg508. Position 510 is an N6-acetyllysine (Lys510). Residues Lys544 and Lys570 each carry the N6-acetyllysine; alternate modification. An N6-succinyllysine; alternate mark is found at Lys544 and Lys570. Lys599 contributes to the ATP binding site. Lys599 is modified (N6-succinyllysine).

It belongs to the ATP-dependent AMP-binding enzyme family.

Its subcellular location is the mitochondrion. It carries out the reaction a medium-chain fatty acid + ATP + CoA = a medium-chain fatty acyl-CoA + AMP + diphosphate. The catalysed reaction is octanoate + ATP + CoA = octanoyl-CoA + AMP + diphosphate. In terms of biological role, acyl-CoA synthases catalyze the initial reaction in fatty acid metabolism, by forming a thioester with CoA. Has some preference toward medium-chain substrates. Plays a role in adipocyte differentiation. This chain is Medium-chain acyl-CoA ligase ACSF2, mitochondrial, found in Rattus norvegicus (Rat).